The primary structure comprises 1335 residues: Aldehyde oxidase 2 (1335 aa).

Residues Asp8–Val95 form the 2Fe-2S ferredoxin-type domain. Cys47, Cys52, Cys55, and Cys77 together coordinate [2Fe-2S] cluster. Gln116 provides a ligand contact to Mo-molybdopterin. 4 residues coordinate [2Fe-2S] cluster: Cys117, Cys120, Cys152, and Cys154. Mo-molybdopterin is bound at residue Cys154. Residues Phe242 to Lys427 enclose the FAD-binding PCMH-type domain. FAD is bound by residues Leu270–Leu277, Ala351, Ser360, His364, Asp373, and Leu417. Mo-molybdopterin-binding positions include Gly821–Phe822, Ala1103–Gly1106, Gln1218, and Leu1285. The Proton acceptor; for azaheterocycle hydroxylase activity role is filled by Glu1287.

Belongs to the xanthine dehydrogenase family. Homodimer. It depends on [2Fe-2S] cluster as a cofactor. FAD is required as a cofactor. Requires Mo-molybdopterin as cofactor. In terms of tissue distribution, detected in kidney, Harderian gland and olfactory mucosa.

Its subcellular location is the cytoplasm. The catalysed reaction is an aldehyde + O2 + H2O = a carboxylate + H2O2 + H(+). Functionally, oxidase with broad substrate specificity, oxidizing aromatic azaheterocycles, such as phthalazine, as well as aldehydes, such as benzaldehyde and retinal. This Cavia porcellus (Guinea pig) protein is Aldehyde oxidase 2 (AOX2).